Reading from the N-terminus, the 197-residue chain is Nucleoside triphosphate pyrophosphatase (197 aa).

Residue D72 is the Proton acceptor of the active site.

The protein belongs to the Maf family. A divalent metal cation is required as a cofactor.

It localises to the cytoplasm. The enzyme catalyses a ribonucleoside 5'-triphosphate + H2O = a ribonucleoside 5'-phosphate + diphosphate + H(+). It carries out the reaction a 2'-deoxyribonucleoside 5'-triphosphate + H2O = a 2'-deoxyribonucleoside 5'-phosphate + diphosphate + H(+). Nucleoside triphosphate pyrophosphatase. May have a dual role in cell division arrest and in preventing the incorporation of modified nucleotides into cellular nucleic acids. The sequence is that of Nucleoside triphosphate pyrophosphatase from Corynebacterium glutamicum (strain ATCC 13032 / DSM 20300 / JCM 1318 / BCRC 11384 / CCUG 27702 / LMG 3730 / NBRC 12168 / NCIMB 10025 / NRRL B-2784 / 534).